Reading from the N-terminus, the 80-residue chain is Exodeoxyribonuclease 7 small subunit (80 aa).

It belongs to the XseB family. As to quaternary structure, heterooligomer composed of large and small subunits.

The protein resides in the cytoplasm. The enzyme catalyses Exonucleolytic cleavage in either 5'- to 3'- or 3'- to 5'-direction to yield nucleoside 5'-phosphates.. Its function is as follows. Bidirectionally degrades single-stranded DNA into large acid-insoluble oligonucleotides, which are then degraded further into small acid-soluble oligonucleotides. The sequence is that of Exodeoxyribonuclease 7 small subunit from Pseudomonas entomophila (strain L48).